The chain runs to 78 residues: Translation initiation factor IF-1 (78 aa).

The S1-like domain occupies 1 to 72; that stretch reads MAKEAEMEFE…TRGRITYRKI (72 aa).

The protein belongs to the IF-1 family. In terms of assembly, component of the 30S ribosomal translation pre-initiation complex which assembles on the 30S ribosome in the order IF-2 and IF-3, IF-1 and N-formylmethionyl-tRNA(fMet); mRNA recruitment can occur at any time during PIC assembly.

The protein localises to the cytoplasm. In terms of biological role, one of the essential components for the initiation of protein synthesis. Stabilizes the binding of IF-2 and IF-3 on the 30S subunit to which N-formylmethionyl-tRNA(fMet) subsequently binds. Helps modulate mRNA selection, yielding the 30S pre-initiation complex (PIC). Upon addition of the 50S ribosomal subunit IF-1, IF-2 and IF-3 are released leaving the mature 70S translation initiation complex. The protein is Translation initiation factor IF-1 of Mesoplasma florum (strain ATCC 33453 / NBRC 100688 / NCTC 11704 / L1) (Acholeplasma florum).